Reading from the N-terminus, the 325-residue chain is uncharacterized protein (325 aa).

The segment at 1–32 (MKQEYIPLDEFPNKSNEGMLNDEGTSSSGLST) is disordered. The span at 23-32 (EGTSSSGLST) shows a compositional bias: low complexity. The stretch at 135–223 (AEEISNLKTS…LKKREDLLRL (89 aa)) forms a coiled coil.

It localises to the cytoplasm. It is found in the cytoskeleton. The protein resides in the microtubule organizing center. The protein localises to the spindle pole body. This is an uncharacterized protein from Schizosaccharomyces pombe (strain 972 / ATCC 24843) (Fission yeast).